Here is a 325-residue protein sequence, read N- to C-terminus: Lipoyl synthase (325 aa).

7 residues coordinate [4Fe-4S] cluster: C66, C71, C77, C92, C96, C99, and S303. The Radical SAM core domain maps to 78–292 (WEDREATFLI…AQFAEGLGFA (215 aa)).

This sequence belongs to the radical SAM superfamily. Lipoyl synthase family. [4Fe-4S] cluster is required as a cofactor.

Its subcellular location is the cytoplasm. The catalysed reaction is [[Fe-S] cluster scaffold protein carrying a second [4Fe-4S](2+) cluster] + N(6)-octanoyl-L-lysyl-[protein] + 2 oxidized [2Fe-2S]-[ferredoxin] + 2 S-adenosyl-L-methionine + 4 H(+) = [[Fe-S] cluster scaffold protein] + N(6)-[(R)-dihydrolipoyl]-L-lysyl-[protein] + 4 Fe(3+) + 2 hydrogen sulfide + 2 5'-deoxyadenosine + 2 L-methionine + 2 reduced [2Fe-2S]-[ferredoxin]. The protein operates within protein modification; protein lipoylation via endogenous pathway; protein N(6)-(lipoyl)lysine from octanoyl-[acyl-carrier-protein]: step 2/2. In terms of biological role, catalyzes the radical-mediated insertion of two sulfur atoms into the C-6 and C-8 positions of the octanoyl moiety bound to the lipoyl domains of lipoate-dependent enzymes, thereby converting the octanoylated domains into lipoylated derivatives. The chain is Lipoyl synthase from Mycobacterium sp. (strain JLS).